Reading from the N-terminus, the 79-residue chain is MSDIADKVKKIVVEHLGVDESKVTPDASFIDDLGADSLDTVELVMAFEEAFSVEIPEDAAEKIATVKDAIDYIEKQKAA.

The Carrier domain maps to 2-77 (SDIADKVKKI…DAIDYIEKQK (76 aa)). Ser37 is subject to O-(pantetheine 4'-phosphoryl)serine.

Belongs to the acyl carrier protein (ACP) family. 4'-phosphopantetheine is transferred from CoA to a specific serine of apo-ACP by AcpS. This modification is essential for activity because fatty acids are bound in thioester linkage to the sulfhydryl of the prosthetic group.

Its subcellular location is the cytoplasm. Its pathway is lipid metabolism; fatty acid biosynthesis. In terms of biological role, carrier of the growing fatty acid chain in fatty acid biosynthesis. This Gluconobacter oxydans (strain 621H) (Gluconobacter suboxydans) protein is Acyl carrier protein.